The chain runs to 466 residues: Soluble pyridine nucleotide transhydrogenase (466 aa).

Residue glutamate 36–cysteine 45 participates in FAD binding.

This sequence belongs to the class-I pyridine nucleotide-disulfide oxidoreductase family. The cofactor is FAD.

The protein resides in the cytoplasm. It catalyses the reaction NAD(+) + NADPH = NADH + NADP(+). In terms of biological role, conversion of NADPH, generated by peripheral catabolic pathways, to NADH, which can enter the respiratory chain for energy generation. This chain is Soluble pyridine nucleotide transhydrogenase, found in Escherichia fergusonii (strain ATCC 35469 / DSM 13698 / CCUG 18766 / IAM 14443 / JCM 21226 / LMG 7866 / NBRC 102419 / NCTC 12128 / CDC 0568-73).